A 507-amino-acid polypeptide reads, in one-letter code: ATP synthase subunit alpha, chloroplastic (507 aa).

An ATP-binding site is contributed by 170-177 (GDRQTGKT). Thr257 is subject to Phosphothreonine.

This sequence belongs to the ATPase alpha/beta chains family. F-type ATPases have 2 components, CF(1) - the catalytic core - and CF(0) - the membrane proton channel. CF(1) has five subunits: alpha(3), beta(3), gamma(1), delta(1), epsilon(1). CF(0) has four main subunits: a, b, b' and c.

It is found in the plastid. The protein resides in the chloroplast thylakoid membrane. It catalyses the reaction ATP + H2O + 4 H(+)(in) = ADP + phosphate + 5 H(+)(out). In terms of biological role, produces ATP from ADP in the presence of a proton gradient across the membrane. The alpha chain is a regulatory subunit. The sequence is that of ATP synthase subunit alpha, chloroplastic from Barbarea verna (Land cress).